A 490-amino-acid polypeptide reads, in one-letter code: MTSKSSPLIFERSREGRYAYSLPKSDIKTNSVESLLDDKFIRKNKAEFPEVAELDLVRHYTELSNKNFGVDNGFYPLGSCTMKYNPKINEKVARIPGFSESHPLQDEDQVQGSLEIIYSLQEELKEITGMDEVTLQPAAGAHGEWTALMIFKAYHENNGEGHRDEVIVPDSAHGTNPASASFAGFKSVTVKSNERGEVDIDDLKRVVNENTAAIMLTNPNTLGIFEKNIMEIREIVHNAGGLLYYDGANLNAIMDKVRPGDMGFDAVHLNLHKTFTGPHGGGGPGSGPVGVVKELASYLPKPMVIKDGDKFKYDNDIKNSIGRVKPFYGNFGIYLRAYTYIRTMGATGLKEVSEAAVLNANYIKARLSKHFEIPYKQYCKHEFVLSGVRQKEFGVRTLDMAKRLLDFGVHPPTIYFPLNVEEGMMIEPTETESKETLDYFIDTLISIAEEAKNDPDKVLEAPHTTVIDRLDEATAARKPILKFENLKQEK.

An N6-(pyridoxal phosphate)lysine modification is found at lysine 273.

It belongs to the GcvP family. C-terminal subunit subfamily. In terms of assembly, the glycine cleavage system is composed of four proteins: P, T, L and H. In this organism, the P 'protein' is a heterodimer of two subunits. It depends on pyridoxal 5'-phosphate as a cofactor.

It carries out the reaction N(6)-[(R)-lipoyl]-L-lysyl-[glycine-cleavage complex H protein] + glycine + H(+) = N(6)-[(R)-S(8)-aminomethyldihydrolipoyl]-L-lysyl-[glycine-cleavage complex H protein] + CO2. In terms of biological role, the glycine cleavage system catalyzes the degradation of glycine. The P protein binds the alpha-amino group of glycine through its pyridoxal phosphate cofactor; CO(2) is released and the remaining methylamine moiety is then transferred to the lipoamide cofactor of the H protein. This is Probable glycine dehydrogenase (decarboxylating) subunit 2 from Staphylococcus aureus (strain MSSA476).